The chain runs to 144 residues: Prefoldin subunit alpha (144 aa).

Belongs to the prefoldin alpha subunit family. As to quaternary structure, heterohexamer of two alpha and four beta subunits.

It localises to the cytoplasm. Functionally, molecular chaperone capable of stabilizing a range of proteins. Seems to fulfill an ATP-independent, HSP70-like function in archaeal de novo protein folding. This Metallosphaera sedula (strain ATCC 51363 / DSM 5348 / JCM 9185 / NBRC 15509 / TH2) protein is Prefoldin subunit alpha.